The sequence spans 69 residues: Putative membrane protein insertion efficiency factor (69 aa).

It belongs to the UPF0161 family.

It is found in the cell membrane. Could be involved in insertion of integral membrane proteins into the membrane. The chain is Putative membrane protein insertion efficiency factor from Caldanaerobacter subterraneus subsp. tengcongensis (strain DSM 15242 / JCM 11007 / NBRC 100824 / MB4) (Thermoanaerobacter tengcongensis).